A 590-amino-acid polypeptide reads, in one-letter code: MSLPETKSDDILLDAWDFQGRPADRSKTGGWASAAMILCIEAVERLTTLGIGVNLVTYLTGTMHLGNATAANTVTNFLGTSFMLCLLGGFIADTFLGRYLTIAIFAAIQATGVSILTLSTIIPGLRPPRCNPTTSSHCEQASGIQLTVLYLALYLTALGTGGVKASVSGFGSDQFDETEPKERSKMTYFFNRFFFCINVGSLLAVTVLVYVQDDVGRKWGYGICAFAIVLALSVFLAGTNRYRFKKLIGSPMTQVAAVIVAAWRNRKLELPADPSYLYDVDDIIAAEGSMKGKQKLPHTEQFRSLDKAAIRDQEAGVTSNVFNKWTLSTLTDVEEVKQIVRMLPIWATCILFWTVHAQLTTLSVAQSETLDRSIGSFEIPPASMAVFYVGGLLLTTAVYDRVAIRLCKKLFNYPHGLRPLQRIGLGLFFGSMAMAVAALVELKRLRTAHAHGPTVKTLPLGFYLLIPQYLIVGIGEALIYTGQLDFFLRECPKGMKGMSTGLLLSTLALGFFFSSVLVTIVEKFTGKAHPWIADDLNKGRLYNFYWLVAVLVALNFLIFLVFSKWYVYKEKRLAEVGIELDDEPSIPMGH.

2 helical membrane-spanning segments follow: residues 46-66 (LTTLGIGVNLVTYLTGTMHLG) and 77-97 (FLGTSFMLCLLGGFIADTFLG). Thr101 carries the post-translational modification Phosphothreonine; by CIPK23. 10 helical membrane passes run 102–122 (IAIFAAIQATGVSILTLSTII), 143–163 (GIQLTVLYLALYLTALGTGGV), 193–213 (FFFCINVGSLLAVTVLVYVQD), 219–239 (WGYGICAFAIVLALSVFLAGT), 342–362 (MLPIWATCILFWTVHAQLTTL), 374–394 (IGSFEIPPASMAVFYVGGLLL), 423–443 (IGLGLFFGSMAMAVAALVELK), 460–480 (LGFYLLIPQYLIVGIGEALIY), 501–521 (GLLLSTLALGFFFSSVLVTIV), and 542–562 (YNFYWLVAVLVALNFLIFLVF). The substrate site is built by His356 and Thr360.

This sequence belongs to the major facilitator superfamily. Proton-dependent oligopeptide transporter (POT/PTR) (TC 2.A.17) family. As to quaternary structure, monomer and homodimer. The dimer has the 2 monomers in the same orientation. Interacts with CIPK23. Post-translationally, acts as a high-affinity nitrate transporter when phosphorylated and as a low-affinity transporter when dephosphorylated. Forms homodimer when unphosphorylated and monomer when phosphorylated. Low nitrogen concentration in the medium stimulates phosphorylation. Phosphorylation also regulates the nitrate signaling. As to expression, expressed in the stele in lateral root primordia before emergence and in the tip of primary and emerged lateral roots. Detected in emerging and immature leaves, guard cells, flower buds, style, stigma, anthers and pollen grains. Not detected in the shoot apical meristem.

Its subcellular location is the membrane. In terms of biological role, dual affinity nitrate transporter. Involved in proton-dependent nitrate uptake and in the regulation of the nitrate transporter NRT2.1. Also acts as a nitrate sensor that trigger a specific signaling pathway stimulating lateral root growth and seed germination. The uptake activity is not required for sensor function. Displays an auxin transport facilitation inhibited by high nitrate concentration. Required to prevent auxin accumulation in preemerged lateral root primordia and young lateral roots when external nitrate concentration is low or null. May be involved in the basipetal transport of auxin out of the lateral root tips. Acts as a bidirectional transporter involved in root-to-shoot nitrate translocation. Recognizes specifically nitrate and chlorate, but not nitrite, alanine, sulfate, phosphate or the di-peptide Ala-Ala. The polypeptide is Protein NRT1/ PTR FAMILY 6.3 (NPF6.3) (Arabidopsis thaliana (Mouse-ear cress)).